Reading from the N-terminus, the 480-residue chain is Pre-glycoprotein polyprotein GP complex (480 aa).

The N-myristoyl glycine; by host moiety is linked to residue Gly-2. Over 2 to 17 (GQLVSFFQEIPVFFQE) the chain is Extracellular. The chain crosses the membrane as a helical span at residues 18–33 (ALNIALAVVTLLAIVK). Over 34–58 (GVLNLWKSGLFQLLMFLILAGRSCS) the chain is Cytoplasmic. Cys-57 is a binding site for Zn(2+). Residues 59-419 (FRIGYHTSFE…QGRTPLTLVD (361 aa)) are Extracellular-facing. Cystine bridges form between Cys-85–Cys-221, Cys-266–Cys-279, Cys-288–Cys-297, and Cys-351–Cys-372. Asn-88, Asn-174, and Asn-214 each carry an N-linked (GlcNAc...) asparagine; by host glycan. 4 N-linked (GlcNAc...) asparagine; by host glycosylation sites follow: Asn-352, Asn-360, Asn-377, and Asn-382. Residues 420–440 (LCFWSAVFYTTTLFLHLVGFP) form a helical membrane-spanning segment. Residues 441–480 (THRHISGEPCPLPHRLNRHGACNCGRFKRLKKPLVWYKHH) are Cytoplasmic-facing. Zn(2+) contacts are provided by His-442, His-444, Cys-450, His-454, Cys-462, Cys-464, and His-480.

Belongs to the arenaviridae GPC protein family. Interacts with glycoprotein G2. Part of the GP complex (GP-C) together with glycoprotein G1 and glycoprotein G2. The GP-complex interacts with protein Z, which interacts with ribonucleocapsid; these interactions may induce virion budding. In terms of assembly, homotrimer; disulfide-linked. In pre-fusion state, G1 homotrimers bind G2 homotrimers via ionic interactions. Part of the GP complex (GP-C) together with glycoprotein G2 and the stable signal peptide. The GP-complex interacts with protein Z, which interacts with ribonucleocapsid; these interactions may induce virion budding. As to quaternary structure, homotrimer. Interacts with the stable signal peptide. In pre-fusion state, G2 homotrimers bind G1 homotrimers via ionic interactions. Part of the GP complex (GP-C) together with glycoprotein G1 and the stable signal peptide. Acidification in the endosome triggers rearrangements, which ultimately leads to a 6 helix bundle formed by the two heptad repeat domains (HR1 and HR2) in post-fusion state. The GP-complex interacts with protein Z, which interacts with ribonucleocapsid; these interactions may induce virion budding. Post-translationally, specific enzymatic cleavages in vivo yield mature proteins. GP-C polyprotein is cleaved in the endoplasmic reticulum by the host protease MBTPS1. Only cleaved glycoprotein is incorporated into virions. The SSP remains stably associated with the GP complex following cleavage by signal peptidase and plays crucial roles in the trafficking of GP through the secretory pathway. In terms of processing, myristoylation is necessary for GP2-mediated fusion activity.

Its subcellular location is the virion membrane. It localises to the host endoplasmic reticulum membrane. The protein localises to the host Golgi apparatus membrane. The protein resides in the host cell membrane. In terms of biological role, functions as a cleaved signal peptide that is retained as the third component of the GP complex (GP-C). Helps to stabilize the spike complex in its native conformation. The SSP is required for efficient glycoprotein expression, post-translational maturation cleavage of G1 and G2, glycoprotein transport to the cell surface plasma membrane, formation of infectious virus particles, and acid pH-dependent glycoprotein-mediated cell fusion. Forms the virion spikes together with glycoprotein G2. The glycoprotein spike trimers are connected to the underlying matrix. Interacts with the host receptor leading to virus endocytosis. Its function is as follows. Forms the virion spikes together with glycoprotein G1. The glycoprotein spike trimers are connected to the underlying matrix. Class I viral fusion protein that directs fusion of viral and host endosomal membranes, leading to delivery of the nucleocapsid into the cytoplasm. Membrane fusion is mediated by irreversible conformational changes induced by acidification. The chain is Pre-glycoprotein polyprotein GP complex from Cupixi mammarenavirus (isolate Rat/Brasil/BeAn 119303/1970) (CPXV).